The chain runs to 458 residues: Zinc finger protein 239 (458 aa).

K108 participates in a covalent cross-link: Glycyl lysine isopeptide (Lys-Gly) (interchain with G-Cter in SUMO2). S191 carries the post-translational modification Phosphoserine. 9 consecutive C2H2-type zinc fingers follow at residues 207–229, 235–257, 263–285, 291–313, 319–341, 347–369, 375–397, 403–425, and 431–453; these read YECSQCGKNFSQSSELLLHQRDH, YKCEQCGKGFTRSSSLLIHQAVH, YKCDKCGKGFTRSSSLLIHHAVH, YKCDKCGKGFSQSSKLHIHQRVH, YECEECGMSFSQRSNLHIHQRVH, YKCGECGKGFSQSSNLHIHRCIH, YQCYECGKGFSQSPDLRIHLRVH, YHCGKCGKGFSQSSKLLIHQRVH, and YECSKCGKGFSQSSNLHIHQRVH.

The protein belongs to the krueppel C2H2-type zinc-finger protein family.

The protein resides in the nucleus. In terms of biological role, may be involved in transcriptional regulation. The protein is Zinc finger protein 239 (ZNF239) of Pongo abelii (Sumatran orangutan).